The primary structure comprises 429 residues: Histidinol dehydrogenase (429 aa).

NAD(+)-binding residues include Tyr-130, Gln-191, and Asn-214. Positions 237, 259, and 262 each coordinate substrate. Zn(2+) contacts are provided by Gln-259 and His-262. Catalysis depends on proton acceptor residues Glu-327 and His-328. Residues His-328, Asp-361, Glu-415, and His-420 each contribute to the substrate site. Asp-361 is a binding site for Zn(2+). Residue His-420 coordinates Zn(2+).

It belongs to the histidinol dehydrogenase family. It depends on Zn(2+) as a cofactor.

The catalysed reaction is L-histidinol + 2 NAD(+) + H2O = L-histidine + 2 NADH + 3 H(+). It functions in the pathway amino-acid biosynthesis; L-histidine biosynthesis; L-histidine from 5-phospho-alpha-D-ribose 1-diphosphate: step 9/9. Catalyzes the sequential NAD-dependent oxidations of L-histidinol to L-histidinaldehyde and then to L-histidine. The protein is Histidinol dehydrogenase of Neisseria meningitidis serogroup B (strain ATCC BAA-335 / MC58).